A 142-amino-acid chain; its full sequence is Universal stress protein C (142 aa).

It belongs to the universal stress protein A family.

Its subcellular location is the cytoplasm. Its function is as follows. Required for resistance to DNA-damaging agents. In Salmonella typhimurium (strain LT2 / SGSC1412 / ATCC 700720), this protein is Universal stress protein C (uspC).